The following is a 194-amino-acid chain: Imidazoleglycerol-phosphate dehydratase (194 aa).

Belongs to the imidazoleglycerol-phosphate dehydratase family.

Its subcellular location is the cytoplasm. The enzyme catalyses D-erythro-1-(imidazol-4-yl)glycerol 3-phosphate = 3-(imidazol-4-yl)-2-oxopropyl phosphate + H2O. The protein operates within amino-acid biosynthesis; L-histidine biosynthesis; L-histidine from 5-phospho-alpha-D-ribose 1-diphosphate: step 6/9. The protein is Imidazoleglycerol-phosphate dehydratase of Bacillus cereus (strain ZK / E33L).